The primary structure comprises 80 residues: Exodeoxyribonuclease 7 small subunit (80 aa).

It belongs to the XseB family. As to quaternary structure, heterooligomer composed of large and small subunits.

The protein localises to the cytoplasm. It carries out the reaction Exonucleolytic cleavage in either 5'- to 3'- or 3'- to 5'-direction to yield nucleoside 5'-phosphates.. Functionally, bidirectionally degrades single-stranded DNA into large acid-insoluble oligonucleotides, which are then degraded further into small acid-soluble oligonucleotides. This chain is Exodeoxyribonuclease 7 small subunit, found in Vibrio cholerae serotype O1 (strain ATCC 39541 / Classical Ogawa 395 / O395).